A 322-amino-acid chain; its full sequence is MKNNNYGVLLVNLGTPDEASPAAIKRFLSEFLHDKRVVDMTRWLWCPILHGVILPIRSPKVAKLYQSVWMEDGSPLMVYSQRQRQALEKQLNVPVALGMTYGTPSIATGLAELKQQGCNKVLVLPLYPQYSGTTTAAVFDRIAKELKQQPHIPELRFINHYFDHPDYIDALALSVTDFWAENGEPDYLLCSYHGIPKRYADNGDPYPQHCHATTEKLAERLAMPREKMSMSYQSIFGREEWLQPYTEVTIEALAQKGIKRLDVMCPAFSVDCLETLEEIAEQCKETFIKAGGDVFNLIPCLNDNEAHIRMMKNLVTQHSQGW.

Residues His-193 and Glu-274 each coordinate Fe cation.

It belongs to the ferrochelatase family.

The protein resides in the cytoplasm. The enzyme catalyses heme b + 2 H(+) = protoporphyrin IX + Fe(2+). It functions in the pathway porphyrin-containing compound metabolism; protoheme biosynthesis; protoheme from protoporphyrin-IX: step 1/1. Functionally, catalyzes the ferrous insertion into protoporphyrin IX. This Photobacterium profundum (strain SS9) protein is Ferrochelatase.